We begin with the raw amino-acid sequence, 70 residues long: DNA gyrase inhibitor YacG (70 aa).

Zn(2+) is bound by residues Cys-7, Cys-10, Cys-26, and Cys-30.

The protein belongs to the DNA gyrase inhibitor YacG family. As to quaternary structure, interacts with GyrB. Zn(2+) is required as a cofactor.

In terms of biological role, inhibits all the catalytic activities of DNA gyrase by preventing its interaction with DNA. Acts by binding directly to the C-terminal domain of GyrB, which probably disrupts DNA binding by the gyrase. This chain is DNA gyrase inhibitor YacG, found in Shewanella woodyi (strain ATCC 51908 / MS32).